The primary structure comprises 454 residues: uncharacterized protein (454 aa).

The 45-residue stretch at 1–45 folds into the TRAM domain; sequence MAAEGKAIAKVNDLVIFVPYVVPGDVVDLQIKRKKNKYAEAEAVK. Residues cysteine 58, cysteine 64, cysteine 67, and cysteine 160 each contribute to the [4Fe-4S] cluster site. S-adenosyl-L-methionine is bound by residues glutamine 286, tyrosine 315, glutamate 336, and aspartate 385. The active-site Nucleophile is cysteine 412.

The protein belongs to the class I-like SAM-binding methyltransferase superfamily. RNA M5U methyltransferase family.

This is an uncharacterized protein from Bacteroides thetaiotaomicron (strain ATCC 29148 / DSM 2079 / JCM 5827 / CCUG 10774 / NCTC 10582 / VPI-5482 / E50).